Consider the following 76-residue polypeptide: DNA-directed RNA polymerase subunit epsilon (76 aa).

The protein belongs to the RNA polymerase subunit epsilon family. RNAP is composed of a core of 2 alpha, a beta and a beta' subunit. The core is associated with a delta subunit, and at least one of epsilon or omega. When a sigma factor is associated with the core the holoenzyme is formed, which can initiate transcription.

The enzyme catalyses RNA(n) + a ribonucleoside 5'-triphosphate = RNA(n+1) + diphosphate. Functionally, a non-essential component of RNA polymerase (RNAP). This chain is DNA-directed RNA polymerase subunit epsilon, found in Streptococcus sanguinis (strain SK36).